Reading from the N-terminus, the 241-residue chain is Leucyl/phenylalanyl-tRNA--protein transferase (241 aa).

Belongs to the L/F-transferase family.

It localises to the cytoplasm. It catalyses the reaction N-terminal L-lysyl-[protein] + L-leucyl-tRNA(Leu) = N-terminal L-leucyl-L-lysyl-[protein] + tRNA(Leu) + H(+). The enzyme catalyses N-terminal L-arginyl-[protein] + L-leucyl-tRNA(Leu) = N-terminal L-leucyl-L-arginyl-[protein] + tRNA(Leu) + H(+). The catalysed reaction is L-phenylalanyl-tRNA(Phe) + an N-terminal L-alpha-aminoacyl-[protein] = an N-terminal L-phenylalanyl-L-alpha-aminoacyl-[protein] + tRNA(Phe). Functions in the N-end rule pathway of protein degradation where it conjugates Leu, Phe and, less efficiently, Met from aminoacyl-tRNAs to the N-termini of proteins containing an N-terminal arginine or lysine. This Neisseria meningitidis serogroup C / serotype 2a (strain ATCC 700532 / DSM 15464 / FAM18) protein is Leucyl/phenylalanyl-tRNA--protein transferase.